We begin with the raw amino-acid sequence, 209 residues long: Bacteriorhodopsin (209 aa).

Residues 1 to 17 form a helical membrane-spanning segment; the sequence is LWLGTAGMFLGMLYFIA. The Cytoplasmic portion of the chain corresponds to 18-31; that stretch reads RGWGETDGRRQKFY. The helical transmembrane segment at 32–50 threads the bilayer; the sequence is IATILITAIAFVNYLAMAL. The Extracellular segment spans residues 51–66; the sequence is GFGLTFIEFGGEQHPI. The helical transmembrane segment at 67–84 threads the bilayer; the sequence is YWARYTDWLFTTPLLLYD. The Cytoplasmic portion of the chain corresponds to 85–95; the sequence is LGLLAGADRNT. The chain crosses the membrane as a helical span at residues 96–115; sequence IYSLVSLDVLMIGTGVVATL. At 116–128 the chain is on the extracellular side; sequence SAGSGVLSAGAER. Residues 129 to 148 form a helical membrane-spanning segment; the sequence is LVWWGISTAFLLVLLYFLFS. Topologically, residues 149–166 are cytoplasmic; sequence SLSGRVANLPSDTRSTFK. A helical membrane pass occupies residues 167 to 185; sequence TLRNLVTVVWLVYPVWWLV. Residues 186–197 are Extracellular-facing; sequence GSEGLGLVGIGI. The chain crosses the membrane as a helical span at residues 198–209; the sequence is ETAGFMVIDLVA.

It belongs to the archaeal/bacterial/fungal opsin family.

It localises to the cell membrane. Functionally, light-driven proton pump. The sequence is that of Bacteriorhodopsin (bop) from Halobacterium halobium (strain shark).